The following is a 415-amino-acid chain: Ammonium transporter Rh type A (415 aa).

Residues 1–2 lie on the Cytoplasmic side of the membrane; the sequence is MR. A helical membrane pass occupies residues 3–23; it reads FIFPTIAVLLEASMIVLFGFF. Residues 24 to 51 lie on the Extracellular side of the membrane; that stretch reads VKYETEQNAIQQPNSTNSTKVDRSLELY. Residues asparagine 37 and asparagine 40 are each glycosylated (N-linked (GlcNAc...) asparagine). A helical transmembrane segment spans residues 52–72; it reads PLFQDVHVMIFVGFGFLMTFL. Topologically, residues 73–76 are cytoplasmic; that stretch reads KKYG. Residues 77–97 form a helical membrane-spanning segment; that stretch reads FSSVGINLLIAALGLQWGTFV. Over 98–115 the chain is Extracellular; that stretch reads QGMVHRHGQTIYIGIKNM. Residues 116–136 form a helical membrane-spanning segment; sequence INADFSTATVLISFGAVLGKI. The Cytoplasmic segment spans residues 137–142; the sequence is SPTQML. Residues 143–163 traverse the membrane as a helical segment; that stretch reads IMTIIEITVFAGNEYVVGEIF. Residues 164–167 lie on the Extracellular side of the membrane; the sequence is QASD. The helical transmembrane segment at 168 to 188 threads the bilayer; sequence IGASMTIHAFGAYFGLAVAGV. The Cytoplasmic portion of the chain corresponds to 189–208; that stretch reads LYRTGLRKGHEKEESEYHSD. Residues 209–229 traverse the membrane as a helical segment; that stretch reads LFAMIGTLFLWMFWPSFNSAI. Topologically, residues 230–236 are extracellular; the sequence is AETAEEQ. The helical transmembrane segment at 237–257 threads the bilayer; the sequence is YLAIINTYLSLVACVLTAYAM. Residues 258 to 268 are Cytoplasmic-facing; it reads SSLVGHRGKLD. Residues 269–287 traverse the membrane as a helical segment; that stretch reads MVHIQNATLAGGVAVGTCA. Over 288–290 the chain is Extracellular; it reads DMK. A helical transmembrane segment spans residues 291–311; that stretch reads IHPYGSLIIGSIAGMVSVLGF. Topologically, residues 312 to 332 are cytoplasmic; that stretch reads RFLTPCLTAKLRIHDTCGVHN. The chain crosses the membrane as a helical span at residues 333 to 353; it reads LHGLPGVVGGLSSIVAILLGV. The Extracellular portion of the chain corresponds to 354 to 363; it reads STASSMTMQA. Residues 364–384 form a helical membrane-spanning segment; the sequence is AALGSSIGSAIAGGLITGLIL. The Cytoplasmic segment spans residues 385 to 415; that stretch reads RFIVRGQPSKDNFFDDSVYWEVPKEKELDNV.

This sequence belongs to the ammonium transporter (TC 2.A.49) family. Rh subfamily. In terms of assembly, homodimer. Heterotrimer; a RHCE monomer interacts with a RHAG homodimer. Component of the ankyrin-1 complex in the erythrocyte, composed of ANK1, RHCE, RHAG, SLC4A1, EPB42, GYPA, GYPB and AQP1. Interacts with GYPB (via the N-terminal); this interaction bridges the (RHAG)2(RHCE) heterotrimer with the SLC4A1 Band 3 I dimer complexed with GYPA. Glycosylated.

It is found in the membrane. The enzyme catalyses methylamine(out) = methylamine(in). It carries out the reaction NH4(+)(in) = NH4(+)(out). The catalysed reaction is CO2(out) = CO2(in). Component of the ankyrin-1 complex, a multiprotein complex involved in the stability and shape of the erythrocyte membrane. Heterotrimer with RHCE (RHAG)2(RHCE), that transports ammonium and its related derivative methylammonium, in both neutral and ionic forms, across the erythrocyte membrane. The transport of NH4(+) is electrogenic and masks the NH3 transport. Also, may act as a CO2 channel. Moreover in erythrocyte, regulates RHD membrane expression and is associated with rhesus blood group antigen expression. In Canis lupus familiaris (Dog), this protein is Ammonium transporter Rh type A.